Here is a 525-residue protein sequence, read N- to C-terminus: GMP synthase [glutamine-hydrolyzing] (525 aa).

One can recognise a Glutamine amidotransferase type-1 domain in the interval 9–207 (RILILDFGSQ…VVDICKCEKL (199 aa)). Cysteine 86 (nucleophile) is an active-site residue. Residues histidine 181 and glutamate 183 contribute to the active site. A GMPS ATP-PPase domain is found at 208 to 400 (WTSASIIDDA…LGLPYDMLYR (193 aa)). 235–241 (SGGVDSS) provides a ligand contact to ATP.

Homodimer.

It catalyses the reaction XMP + L-glutamine + ATP + H2O = GMP + L-glutamate + AMP + diphosphate + 2 H(+). It functions in the pathway purine metabolism; GMP biosynthesis; GMP from XMP (L-Gln route): step 1/1. Functionally, catalyzes the synthesis of GMP from XMP. The polypeptide is GMP synthase [glutamine-hydrolyzing] (Colwellia psychrerythraea (strain 34H / ATCC BAA-681) (Vibrio psychroerythus)).